The following is a 31-amino-acid chain: Cyclotide mden-J (31 aa).

Residues 1–31 (GSIPCGESCVYIPCISSIVGCACKSKVCYKN) constitute a cross-link (cyclopeptide (Gly-Asn)). Disulfide bonds link Cys5–Cys21, Cys9–Cys23, and Cys14–Cys28.

This sequence belongs to the cyclotide family. Bracelet subfamily. This is a cyclic peptide.

Probably participates in a plant defense mechanism. The chain is Cyclotide mden-J from Melicytus dentatus (Tree violet).